Here is a 472-residue protein sequence, read N- to C-terminus: Aspartyl/glutamyl-tRNA(Asn/Gln) amidotransferase subunit B (472 aa).

Belongs to the GatB/GatE family. GatB subfamily. As to quaternary structure, heterotrimer of A, B and C subunits.

It carries out the reaction L-glutamyl-tRNA(Gln) + L-glutamine + ATP + H2O = L-glutaminyl-tRNA(Gln) + L-glutamate + ADP + phosphate + H(+). It catalyses the reaction L-aspartyl-tRNA(Asn) + L-glutamine + ATP + H2O = L-asparaginyl-tRNA(Asn) + L-glutamate + ADP + phosphate + 2 H(+). Functionally, allows the formation of correctly charged Asn-tRNA(Asn) or Gln-tRNA(Gln) through the transamidation of misacylated Asp-tRNA(Asn) or Glu-tRNA(Gln) in organisms which lack either or both of asparaginyl-tRNA or glutaminyl-tRNA synthetases. The reaction takes place in the presence of glutamine and ATP through an activated phospho-Asp-tRNA(Asn) or phospho-Glu-tRNA(Gln). The sequence is that of Aspartyl/glutamyl-tRNA(Asn/Gln) amidotransferase subunit B from Campylobacter jejuni subsp. jejuni serotype O:2 (strain ATCC 700819 / NCTC 11168).